The primary structure comprises 674 residues: Acetyl-coenzyme A synthetase (674 aa).

CoA-binding positions include 201–204 (RGGR) and Thr-320. Residues 396–398 (GEP), 420–425 (DTYWQT), Asp-518, and Arg-533 contribute to the ATP site. Residue Ser-541 coordinates CoA. Arg-544 is a binding site for ATP. Arg-603 contributes to the CoA binding site.

Belongs to the ATP-dependent AMP-binding enzyme family.

It catalyses the reaction acetate + ATP + CoA = acetyl-CoA + AMP + diphosphate. This Dictyostelium discoideum (Social amoeba) protein is Acetyl-coenzyme A synthetase (acsA).